The primary structure comprises 93 residues: UPF0358 protein BBR47_22520 (93 aa).

The protein belongs to the UPF0358 family.

This Brevibacillus brevis (strain 47 / JCM 6285 / NBRC 100599) protein is UPF0358 protein BBR47_22520.